The sequence spans 541 residues: uncharacterized protein (541 aa).

5 helical membrane-spanning segments follow: residues 10 to 32 (LNNQ…KINI), 39 to 57 (SSAI…YTLP), 62 to 84 (TLGL…FFSL), 91 to 113 (LSLG…TYLF), and 146 to 168 (APAA…IQII). RCK C-terminal domains lie at 183–260 (LNKE…DDLE) and 268–352 (TPVD…IFGN). Helical transmembrane passes span 357–375 (SYNF…GFIL), 385–407 (SGIF…SNIY), 428–447 (GLVL…ILAT), 452–474 (GLQL…VFIC), 481–500 (PFLS…PGLA), and 515–537 (YATV…IFIV).

It belongs to the AAE transporter (TC 2.A.81) family.

Its subcellular location is the cell membrane. This is an uncharacterized protein from Desulfotalea psychrophila (strain LSv54 / DSM 12343).